The primary structure comprises 267 residues: Hydroxynaphthalene reductase-like protein Arp2 (267 aa).

NADP(+)-binding residues include isoleucine 25, asparagine 45, aspartate 71, and asparagine 98. Catalysis depends on proton donor residues serine 147 and serine 148. Positions 162, 166, 195, and 197 each coordinate NADP(+). The Proton acceptor role is filled by tyrosine 162. Catalysis depends on lysine 166, which acts as the Lowers pKa of active site Tyr.

This sequence belongs to the short-chain dehydrogenases/reductases (SDR) family.

Hydroxynaphthalene reductase-like protein; part of the Pks2 gene cluster that mediates the formation of infectious structures (appressoria), enabling these fungi to kill insects faster. The product of the Pks2 gene cluster is different from the one of Pks1 and has still not been identified. The chain is Hydroxynaphthalene reductase-like protein Arp2 from Metarhizium majus (strain ARSEF 297).